The following is a 285-amino-acid chain: G patch domain-containing protein 11 (285 aa).

Positions 51–87 (MLRQIREARRKEEKQQEANLKNRQKSLKEEEQERRDI) form a coiled coil. Residues 59 to 84 (RRKEEKQQEANLKNRQKSLKEEEQER) form a disordered region. The G-patch domain occupies 95–141 (CENKGFALLQKMGYKSGQALGKSGGGIVEPIPLNIKTGKSGIGHEAS). At serine 141 the chain carries Phosphoserine. Lysine 149 carries the N6-acetyllysine modification. Residues 218–235 (EETEEDEEEKEQDEDEYK) are compositionally biased toward acidic residues. A disordered region spans residues 218-237 (EETEEDEEEKEQDEDEYKSE).

This sequence belongs to the GPATCH11 family.

The protein localises to the chromosome. Its subcellular location is the centromere. The protein resides in the kinetochore. This is G patch domain-containing protein 11 (GPATCH11) from Homo sapiens (Human).